The following is a 261-amino-acid chain: Probable cyclic nucleotide phosphodiesterase PSM_A2567 (261 aa).

D22, H24, D62, N94, H160, H198, and H200 together coordinate Fe cation. Residues H24, D62, and 94–95 (NH) contribute to the AMP site. H200 provides a ligand contact to AMP.

It belongs to the cyclic nucleotide phosphodiesterase class-III family. Requires Fe(2+) as cofactor.

This is Probable cyclic nucleotide phosphodiesterase PSM_A2567 from Pseudoalteromonas sp. (strain SM9913).